A 149-amino-acid polypeptide reads, in one-letter code: MELILLQKVANLGALGDKVTVKPGYGRNFLLPKGVAVPATEANLAAFQAKRAEYEAKAKSELDQAQARAAKFEGASVTVSAHASTEGKLYGSVGARDIAEAFTAVGLPLEKKEVILGEGPFRLIGEYDVLLHLHADVESTVKVIVQGVP.

The protein belongs to the bacterial ribosomal protein bL9 family.

In terms of biological role, binds to the 23S rRNA. The polypeptide is Large ribosomal subunit protein bL9 (Xylella fastidiosa (strain 9a5c)).